Consider the following 728-residue polypeptide: Hepatocyte growth factor (728 aa).

The N-terminal stretch at 1–32 is a signal peptide; the sequence is MMWGTKLLPVLLLQHVLLHLLLLPVTIPYAEG. The residue at position 33 (glutamine 33) is a Pyrrolidone carboxylic acid. The PAN domain occupies 38–124; sequence NTLHEFKKSA…HEFDLYENKD (87 aa). 8 disulfides stabilise this stretch: cysteine 71–cysteine 97, cysteine 75–cysteine 85, cysteine 129–cysteine 207, cysteine 150–cysteine 190, cysteine 178–cysteine 202, cysteine 212–cysteine 289, cysteine 233–cysteine 272, and cysteine 261–cysteine 284. Kringle domains follow at residues 129–207 and 212–289; these read CIIG…IPQC and CMTC…IKMC. An N-linked (GlcNAc...) asparagine glycan is attached at asparagine 295. 11 cysteine pairs are disulfide-bonded: cysteine 306-cysteine 384, cysteine 327-cysteine 366, cysteine 355-cysteine 378, cysteine 392-cysteine 470, cysteine 413-cysteine 453, cysteine 441-cysteine 465, cysteine 488-cysteine 607, cysteine 520-cysteine 536, cysteine 615-cysteine 682, cysteine 645-cysteine 661, and cysteine 672-cysteine 700. 2 consecutive Kringle domains span residues 306-384 and 392-470; these read CIKG…IPKC and CYRG…ISRC. A glycan (N-linked (GlcNAc...) asparagine) is linked at asparagine 403. In terms of domain architecture, Peptidase S1 spans 496 to 724; it reads VVNGIPTQTT…YAKWIHKVIL (229 aa). Residues asparagine 569 and asparagine 656 are each glycosylated (N-linked (GlcNAc...) asparagine).

This sequence belongs to the peptidase S1 family. Plasminogen subfamily. Dimer of an alpha chain and a beta chain linked by a disulfide bond. Interacts with SRPX2; the interaction increases HGF mitogenic activity. In terms of processing, the single-chain precursor undergoes proteolytic processing by TMPRSS13 resulting in an active two-chain form. The single-chain precursor undergoes proteolytic processing by HGFAC resulting in an active two-chain form.

In terms of biological role, potent mitogen for mature parenchymal hepatocyte cells, seems to be a hepatotrophic factor, and acts as a growth factor for a broad spectrum of tissues and cell types. Activating ligand for the receptor tyrosine kinase MET by binding to it and promoting its dimerization. Activates MAPK signaling following TMPRSS13 cleavage and activation. This Rattus norvegicus (Rat) protein is Hepatocyte growth factor (Hgf).